Here is a 322-residue protein sequence, read N- to C-terminus: Ferredoxin--NADP reductase (322 aa).

FAD is bound by residues D33, Q41, Y46, A86, F120, D278, and S319.

Belongs to the ferredoxin--NADP reductase type 2 family. Homodimer. FAD serves as cofactor.

It catalyses the reaction 2 reduced [2Fe-2S]-[ferredoxin] + NADP(+) + H(+) = 2 oxidized [2Fe-2S]-[ferredoxin] + NADPH. The sequence is that of Ferredoxin--NADP reductase from Salinispora tropica (strain ATCC BAA-916 / DSM 44818 / JCM 13857 / NBRC 105044 / CNB-440).